The chain runs to 103 residues: Large ribosomal subunit protein bL21 (103 aa).

It belongs to the bacterial ribosomal protein bL21 family. Part of the 50S ribosomal subunit. Contacts protein L20.

Functionally, this protein binds to 23S rRNA in the presence of protein L20. The sequence is that of Large ribosomal subunit protein bL21 from Acidovorax ebreus (strain TPSY) (Diaphorobacter sp. (strain TPSY)).